We begin with the raw amino-acid sequence, 295 residues long: Pyridoxal 5'-phosphate synthase subunit PdxS (295 aa).

D25 is a D-ribose 5-phosphate binding site. K82 serves as the catalytic Schiff-base intermediate with D-ribose 5-phosphate. Position 154 (G154) interacts with D-ribose 5-phosphate. R166 lines the D-glyceraldehyde 3-phosphate pocket. D-ribose 5-phosphate contacts are provided by residues G215 and 236–237 (GS).

This sequence belongs to the PdxS/SNZ family. As to quaternary structure, in the presence of PdxT, forms a dodecamer of heterodimers.

The catalysed reaction is aldehydo-D-ribose 5-phosphate + D-glyceraldehyde 3-phosphate + L-glutamine = pyridoxal 5'-phosphate + L-glutamate + phosphate + 3 H2O + H(+). It functions in the pathway cofactor biosynthesis; pyridoxal 5'-phosphate biosynthesis. Its function is as follows. Catalyzes the formation of pyridoxal 5'-phosphate from ribose 5-phosphate (RBP), glyceraldehyde 3-phosphate (G3P) and ammonia. The ammonia is provided by the PdxT subunit. Can also use ribulose 5-phosphate and dihydroxyacetone phosphate as substrates, resulting from enzyme-catalyzed isomerization of RBP and G3P, respectively. This is Pyridoxal 5'-phosphate synthase subunit PdxS from Listeria welshimeri serovar 6b (strain ATCC 35897 / DSM 20650 / CCUG 15529 / CIP 8149 / NCTC 11857 / SLCC 5334 / V8).